The following is a 180-amino-acid chain: Crossover junction endodeoxyribonuclease RuvC (180 aa).

Residues D7, E66, and D138 contribute to the active site. Residues D7, E66, and D138 each contribute to the Mg(2+) site.

The protein belongs to the RuvC family. As to quaternary structure, homodimer which binds Holliday junction (HJ) DNA. The HJ becomes 2-fold symmetrical on binding to RuvC with unstacked arms; it has a different conformation from HJ DNA in complex with RuvA. In the full resolvosome a probable DNA-RuvA(4)-RuvB(12)-RuvC(2) complex forms which resolves the HJ. The cofactor is Mg(2+).

Its subcellular location is the cytoplasm. It carries out the reaction Endonucleolytic cleavage at a junction such as a reciprocal single-stranded crossover between two homologous DNA duplexes (Holliday junction).. The RuvA-RuvB-RuvC complex processes Holliday junction (HJ) DNA during genetic recombination and DNA repair. Endonuclease that resolves HJ intermediates. Cleaves cruciform DNA by making single-stranded nicks across the HJ at symmetrical positions within the homologous arms, yielding a 5'-phosphate and a 3'-hydroxyl group; requires a central core of homology in the junction. The consensus cleavage sequence is 5'-(A/T)TT(C/G)-3'. Cleavage occurs on the 3'-side of the TT dinucleotide at the point of strand exchange. HJ branch migration catalyzed by RuvA-RuvB allows RuvC to scan DNA until it finds its consensus sequence, where it cleaves and resolves the cruciform DNA. This is Crossover junction endodeoxyribonuclease RuvC from Burkholderia orbicola (strain MC0-3).